Consider the following 186-residue polypeptide: Elongation factor P (186 aa).

It belongs to the elongation factor P family.

The protein resides in the cytoplasm. It participates in protein biosynthesis; polypeptide chain elongation. Its function is as follows. Involved in peptide bond synthesis. Stimulates efficient translation and peptide-bond synthesis on native or reconstituted 70S ribosomes in vitro. Probably functions indirectly by altering the affinity of the ribosome for aminoacyl-tRNA, thus increasing their reactivity as acceptors for peptidyl transferase. The chain is Elongation factor P from Mycoplasmopsis synoviae (strain 53) (Mycoplasma synoviae).